Reading from the N-terminus, the 429-residue chain is 5-methylthioadenosine/S-adenosylhomocysteine deaminase (429 aa).

2 residues coordinate Zn(2+): histidine 66 and histidine 68. Substrate-binding residues include glutamate 95, arginine 147, arginine 158, and histidine 181. Residue histidine 208 coordinates Zn(2+). Residues glutamate 211 and aspartate 296 each coordinate substrate. A Zn(2+)-binding site is contributed by aspartate 296.

Belongs to the metallo-dependent hydrolases superfamily. MTA/SAH deaminase family. The cofactor is Zn(2+).

The catalysed reaction is S-adenosyl-L-homocysteine + H2O + H(+) = S-inosyl-L-homocysteine + NH4(+). It catalyses the reaction S-methyl-5'-thioadenosine + H2O + H(+) = S-methyl-5'-thioinosine + NH4(+). In terms of biological role, catalyzes the deamination of 5-methylthioadenosine and S-adenosyl-L-homocysteine into 5-methylthioinosine and S-inosyl-L-homocysteine, respectively. Is also able to deaminate adenosine. The sequence is that of 5-methylthioadenosine/S-adenosylhomocysteine deaminase from Caldicellulosiruptor saccharolyticus (strain ATCC 43494 / DSM 8903 / Tp8T 6331).